Consider the following 264-residue polypeptide: Undecaprenyl-diphosphatase (264 aa).

7 helical membrane passes run 38–58 (RSDF…VLVF), 75–95 (REYV…GLVV), 106–126 (VSPV…VEAY), 136–156 (VTWT…VFPG), 181–201 (FVFL…FLEM), 217–237 (VAFL…MGYI), and 242–262 (FTAF…WLPS).

Belongs to the UppP family.

The protein localises to the cell inner membrane. The enzyme catalyses di-trans,octa-cis-undecaprenyl diphosphate + H2O = di-trans,octa-cis-undecaprenyl phosphate + phosphate + H(+). In terms of biological role, catalyzes the dephosphorylation of undecaprenyl diphosphate (UPP). Confers resistance to bacitracin. The chain is Undecaprenyl-diphosphatase from Stenotrophomonas maltophilia (strain R551-3).